A 382-amino-acid polypeptide reads, in one-letter code: MAKRDYYEVLGVSRTASADELKKAYRTKAKELHPDRNADNPQAEAQFKEVNEAYDVLRDADKKAAYDRYGHAAFEGGMGGGARAGGGYGQQGDFASAFSDVFEDLFGDFMGGRGGAPRSRAQRGSDLRYNLRVTLDEAYRGVQKTINVPASVACDACKGTGAEGGAEAVTCPTCSGMGKVRAQQGFFTVERTCPTCNGMGQIVKNPCKVCHGAGRVEKERSLSVNIPAGVETGTRIRLAGEGEAGMRGGPSGDLYIFIEVREHALFQRDGVHLFCRVPVSIAAAALGGEVEVPTIDGGSSRVKIPAGSQTGKQMRLRGKGMPALRGGGAGDMLIELAVETPVNLTARQKELLREFEKLSEDNNPEGKSFFSKVKGFWDGMTG.

One can recognise a J domain in the interval 5–70; that stretch reads DYYEVLGVSR…DKKAAYDRYG (66 aa). A CR-type zinc finger spans residues 141-219; the sequence is GVQKTINVPA…CHGAGRVEKE (79 aa). Zn(2+) contacts are provided by C154, C157, C171, C174, C193, C196, C207, and C210. CXXCXGXG motif repeat units lie at residues 154–161, 171–178, 193–200, and 207–214; these read CDACKGTG, CPTCSGMG, CPTCNGMG, and CKVCHGAG.

Belongs to the DnaJ family. In terms of assembly, homodimer. Requires Zn(2+) as cofactor.

It is found in the cytoplasm. Participates actively in the response to hyperosmotic and heat shock by preventing the aggregation of stress-denatured proteins and by disaggregating proteins, also in an autonomous, DnaK-independent fashion. Unfolded proteins bind initially to DnaJ; upon interaction with the DnaJ-bound protein, DnaK hydrolyzes its bound ATP, resulting in the formation of a stable complex. GrpE releases ADP from DnaK; ATP binding to DnaK triggers the release of the substrate protein, thus completing the reaction cycle. Several rounds of ATP-dependent interactions between DnaJ, DnaK and GrpE are required for fully efficient folding. Also involved, together with DnaK and GrpE, in the DNA replication of plasmids through activation of initiation proteins. The sequence is that of Chaperone protein DnaJ from Cereibacter sphaeroides (strain ATCC 17023 / DSM 158 / JCM 6121 / CCUG 31486 / LMG 2827 / NBRC 12203 / NCIMB 8253 / ATH 2.4.1.) (Rhodobacter sphaeroides).